Reading from the N-terminus, the 352-residue chain is Speedy protein E18 (352 aa).

The span at 1–12 (MDRTKTRFRKRG) shows a compositional bias: basic residues. Residues 1 to 90 (MDRTKTRFRK…EPEKELAPEP (90 aa)) are disordered. Polar residues predominate over residues 16 to 39 (GKITTSRQPHPQNEQSLQRSTSGY). A compositionally biased stretch (acidic residues) spans 76-90 (DESEEEPEKELAPEP).

This sequence belongs to the Speedy/Ringo family.

The protein is Speedy protein E18 of Homo sapiens (Human).